The following is a 31-amino-acid chain: Small protein MgtS (31 aa).

Topologically, residues 1–4 are periplasmic; it reads MLGN. The helical transmembrane segment at 5–25 threads the bilayer; it reads MNVFMAVLGIILFSGFLAAYF. Residues 26–31 are Cytoplasmic-facing; it reads SHKWDD.

As to quaternary structure, interacts with MgtA.

It is found in the cell inner membrane. Its function is as follows. Modulates intracellular Mg(2+) levels to maintain cellular integrity upon Mg(2+) limitation. Acts by binding and stabilizing the Mg(2+) transporter MgtA, thereby leading to increased intracellular level of Mg(2+). May inhibit FtsH proteolysis of MgtA. The sequence is that of Small protein MgtS from Escherichia coli (strain K12).